A 1060-amino-acid chain; its full sequence is Valine--tRNA ligase, mitochondrial (1060 aa).

Residues 1 to 15 (MPHLPLASFRPPLWG) constitute a mitochondrion transit peptide. Residues 25 to 50 (PQALCTQPEPHGSPVSRRNREAKQKR) are disordered. The short motif at 146-156 (PNVTGSLHIGH) is the 'HIGH' region element. Lys548 is modified (N6-acetyllysine). The short motif at 659 to 663 (KMSKS) is the 'KMSKS' region element. Lys662 contributes to the ATP binding site.

The protein belongs to the class-I aminoacyl-tRNA synthetase family.

Its subcellular location is the mitochondrion. It catalyses the reaction tRNA(Val) + L-valine + ATP = L-valyl-tRNA(Val) + AMP + diphosphate. In terms of biological role, catalyzes the attachment of valine to tRNA(Val) in a two-step reaction: valine is first activated by ATP to form Val-AMP and then transferred to the acceptor end of tRNA(Val). In Mus musculus (Mouse), this protein is Valine--tRNA ligase, mitochondrial (Vars2).